A 495-amino-acid polypeptide reads, in one-letter code: MSNNKKLTSLFGAPVSDRENSMTAGPRGPLLMQDWYFLEQMAHFDREVIPERRMHAKGSGAFGTFTVTNDITQYTSASIFSEVGKQTEMFARFSTVAGERGAADAERDIRGFALKFYTDEGNWDLVGNNTPVFFFRDPKLFASLNHAIKRDPRTNMRSAQNNWDFWTSLPEALHQVTILMTDRGIPKGFRNMHGFGSHTYSMYNDKGERVWVKFHHRTQQGIENLQPDEAARTIAEDRESSQRDLFEAIENKDYPKWKTYIQVMTEEQARNHKDNPFDLTKVWYKGDYPLIEVGEWELNRNPDNYFQDVEQAAFAPTNIVPGIDFSPDRMLQGRLFSYGDAQRYRLGVNHWQIPVNQPKGVGIENICPFSRDGQMRILDNNQGGSTHYYPNSEGAFEDQPEFKKPGLKVEGEAYEYDFREDDDNYFEQPGRLFRLQSKEQQERIFENTANEMQGTTLEVQHRHIRHCYKADSEYGKGVAKALGIDINDVDLEVKD.

A disordered region spans residues 1-25 (MSNNKKLTSLFGAPVSDRENSMTAG). Residues H55 and N128 contribute to the active site. Y338 contributes to the heme binding site.

This sequence belongs to the catalase family. Homodimer. The cofactor is heme.

The catalysed reaction is 2 H2O2 = O2 + 2 H2O. Decomposes hydrogen peroxide into water and oxygen; serves to protect cells from the toxic effects of hydrogen peroxide. The sequence is that of Catalase (katA) from Staphylococcus saprophyticus subsp. saprophyticus (strain ATCC 15305 / DSM 20229 / NCIMB 8711 / NCTC 7292 / S-41).